Consider the following 198-residue polypeptide: dTTP/UTP pyrophosphatase (198 aa).

The Proton acceptor role is filled by Asp-72.

Belongs to the Maf family. YhdE subfamily. It depends on a divalent metal cation as a cofactor.

It localises to the cytoplasm. It catalyses the reaction dTTP + H2O = dTMP + diphosphate + H(+). It carries out the reaction UTP + H2O = UMP + diphosphate + H(+). Functionally, nucleoside triphosphate pyrophosphatase that hydrolyzes dTTP and UTP. May have a dual role in cell division arrest and in preventing the incorporation of modified nucleotides into cellular nucleic acids. The sequence is that of dTTP/UTP pyrophosphatase from Pseudomonas fluorescens (strain Pf0-1).